The chain runs to 156 residues: ATP synthase subunit b (156 aa).

Residues 7-29 traverse the membrane as a helical segment; that stretch reads LLGQAIAFALFVWFCMKYVWPPI.

The protein belongs to the ATPase B chain family. In terms of assembly, F-type ATPases have 2 components, F(1) - the catalytic core - and F(0) - the membrane proton channel. F(1) has five subunits: alpha(3), beta(3), gamma(1), delta(1), epsilon(1). F(0) has three main subunits: a(1), b(2) and c(10-14). The alpha and beta chains form an alternating ring which encloses part of the gamma chain. F(1) is attached to F(0) by a central stalk formed by the gamma and epsilon chains, while a peripheral stalk is formed by the delta and b chains.

Its subcellular location is the cell inner membrane. Its function is as follows. F(1)F(0) ATP synthase produces ATP from ADP in the presence of a proton or sodium gradient. F-type ATPases consist of two structural domains, F(1) containing the extramembraneous catalytic core and F(0) containing the membrane proton channel, linked together by a central stalk and a peripheral stalk. During catalysis, ATP synthesis in the catalytic domain of F(1) is coupled via a rotary mechanism of the central stalk subunits to proton translocation. In terms of biological role, component of the F(0) channel, it forms part of the peripheral stalk, linking F(1) to F(0). The polypeptide is ATP synthase subunit b (Aliivibrio salmonicida (strain LFI1238) (Vibrio salmonicida (strain LFI1238))).